Reading from the N-terminus, the 136-residue chain is Histone H3.1/H3.2 (136 aa).

Residues Met-1–Lys-43 form a disordered region. Lys-5 is modified (N6,N6,N6-trimethyllysine; alternate). An N6,N6-dimethyllysine; alternate modification is found at Lys-5. An N6-methyllysine; alternate mark is found at Lys-5 and Lys-10. An N6-acetyllysine; alternate modification is found at Lys-10. Residue Ser-11 is modified to Phosphoserine. Position 15 is an N6,N6-dimethyllysine; alternate (Lys-15). 5 positions are modified to N6-acetyllysine; alternate: Lys-15, Lys-19, Lys-24, Lys-28, and Lys-37. Lys-19, Lys-24, Lys-28, and Lys-37 each carry N6-methyllysine; alternate. N6,N6,N6-trimethyllysine; alternate is present on residues Lys-28 and Lys-37. 2 positions are modified to N6,N6-dimethyllysine; alternate: Lys-28 and Lys-37. N6-acetyllysine occurs at positions 57 and 65. Position 80 is an N6,N6,N6-trimethyllysine; alternate (Lys-80). Lys-80 carries the N6,N6-dimethyllysine; alternate modification. Lys-80 carries the post-translational modification N6-methyllysine; alternate.

The protein belongs to the histone H3 family. The nucleosome is a histone octamer containing two molecules each of H2A, H2B, H3 and H4 assembled in one H3-H4 heterotetramer and two H2A-H2B heterodimers. The octamer wraps approximately 147 bp of DNA. In terms of processing, phosphorylated to form H3S10ph. H3S10ph promotes subsequent H3K14ac formation and is required for transcriptional activation through TBP recruitment to the promoters. Mono-, di- and trimethylated by the COMPASS complex to form H3K4me1/2/3. H3K4me activates gene expression by regulating transcription elongation and plays a role in telomere length maintenance. H3K4me enrichment correlates with transcription levels, and occurs in a 5' to 3' gradient with H3K4me3 enrichment at the 5'-end of genes, shifting to H3K4me2 and then H3K4me1. Methylated by SET2 to form H3K36me. H3K36me represses gene expression. Methylated by DOT1 to form H3K79me. H3K79me is required for association of SIR proteins with telomeric regions and for telomeric silencing. The COMPASS-mediated formation of H3K4me2/3 and the DOT1-mediated formation of H3K79me require H2BK123ub1. Post-translationally, acetylation of histone H3 leads to transcriptional activation. H3K14ac formation by GCN5 is promoted by H3S10ph. H3K14ac can also be formed by ESA1. H3K56ac formation occurs predominantly in newly synthesized H3 molecules during G1, S and G2/M of the cell cycle and may be involved in DNA repair.

The protein localises to the nucleus. It is found in the chromosome. In terms of biological role, core component of nucleosome. Nucleosomes wrap and compact DNA into chromatin, limiting DNA accessibility to the cellular machineries which require DNA as a template. Histones thereby play a central role in transcription regulation, DNA repair, DNA replication and chromosomal stability. DNA accessibility is regulated via a complex set of post-translational modifications of histones, also called histone code, and nucleosome remodeling. The protein is Histone H3.1/H3.2 (HHT1) of Meyerozyma guilliermondii (strain ATCC 6260 / CBS 566 / DSM 6381 / JCM 1539 / NBRC 10279 / NRRL Y-324) (Yeast).